We begin with the raw amino-acid sequence, 228 residues long: Large ribosomal subunit protein bL25 (228 aa).

Residues 196–228 (EEAAVAEAQSAESAEGKAEAEAEATNEKNKSEA) form a disordered region. The span at 209-228 (AEGKAEAEAEATNEKNKSEA) shows a compositional bias: basic and acidic residues.

This sequence belongs to the bacterial ribosomal protein bL25 family. CTC subfamily. In terms of assembly, part of the 50S ribosomal subunit; part of the 5S rRNA/L5/L18/L25 subcomplex. Contacts the 5S rRNA. Binds to the 5S rRNA independently of L5 and L18.

Its function is as follows. This is one of the proteins that binds to the 5S RNA in the ribosome where it forms part of the central protuberance. This is Large ribosomal subunit protein bL25 from Methylorubrum extorquens (strain CM4 / NCIMB 13688) (Methylobacterium extorquens).